The primary structure comprises 105 residues: Thioredoxin (105 aa).

In terms of domain architecture, Thioredoxin spans 2 to 105; sequence VKQIDSKDAF…KLEATINEFV (104 aa). K3 carries the post-translational modification N6-acetyllysine. N6-succinyllysine is present on K8. Catalysis depends on nucleophile residues C32 and C35. Cysteines 32 and 35 form a disulfide. K39 is subject to N6-acetyllysine. S-nitrosocysteine occurs at positions 62 and 69. C73 carries the S-nitrosocysteine; alternate modification. K94 is modified (N6-acetyllysine; alternate). Position 94 is an N6-succinyllysine; alternate (K94).

It belongs to the thioredoxin family. In terms of assembly, homodimer; disulfide-linked. Interacts with TXNIP through the redox-active site. Interacts with MAP3K5 and CASP3. Interacts with APEX1; the interaction stimulates the FOS/JUN AP-1 DNA-binding activity in a redox-dependent manner. In the fully reduced protein, both Cys-69 and Cys-73 are nitrosylated in response to nitric oxide (NO). When two disulfide bonds are present in the protein, only Cys-73 is nitrosylated. Cys-73 can serve as donor for nitrosylation of target proteins.

It is found in the nucleus. It localises to the cytoplasm. The protein resides in the secreted. Participates in various redox reactions through the reversible oxidation of its active center dithiol to a disulfide and catalyzes dithiol-disulfide exchange reactions. Plays a role in the reversible S-nitrosylation of cysteine residues in target proteins, and thereby contributes to the response to intracellular nitric oxide. Nitrosylates the active site Cys of CASP3 in response to nitric oxide (NO), and thereby inhibits caspase-3 activity. Induces the FOS/JUN AP-1 DNA binding activity in ionizing radiation (IR) cells through its oxidation/reduction status and stimulates AP-1 transcriptional activity. The chain is Thioredoxin (TXN) from Callithrix jacchus (White-tufted-ear marmoset).